The primary structure comprises 85 residues: Alpha-conotoxin Lt28.1 (85 aa).

The signal sequence occupies residues 1 to 21 (MPKLEMMLLVLLILPLCYIDA). A propeptide spanning residues 22–40 (VGPPPPWNMEDEIIEHWQK) is cleaved from the precursor. Cystine bridges form between Cys61–Cys74, Cys66–Cys84, Cys67–Cys79, and Cys72–Cys81.

This sequence belongs to the conotoxin D superfamily. In terms of tissue distribution, expressed by the venom duct.

The protein resides in the secreted. Alpha-conotoxins act on postsynaptic membranes, they bind to the nicotinic acetylcholine receptors (nAChR) and thus inhibit them. This toxin weakly inhibits alpha-9-alpha-10/CHRNA9-CHRNA10 nAChRs (IC(50)=3 uM). The sequence is that of Alpha-conotoxin Lt28.1 from Conus litteratus (Lettered cone).